The following is a 297-amino-acid chain: HTH-type transcriptional regulator ArgP (297 aa).

Residues 4-60 form the HTH lysR-type domain; that stretch reads PDYRTLQALDAVIRERGFERAAQKLCITQSAVSQRIKQLENMFGQPLLVRTVPPRPT. The segment at residues 21-40 is a DNA-binding region (H-T-H motif); the sequence is FERAAQKLCITQSAVSQRIK.

This sequence belongs to the LysR transcriptional regulatory family. As to quaternary structure, homodimer.

In terms of biological role, controls the transcription of genes involved in arginine and lysine metabolism. The chain is HTH-type transcriptional regulator ArgP from Klebsiella pneumoniae subsp. pneumoniae (strain ATCC 700721 / MGH 78578).